Consider the following 331-residue polypeptide: Neurogenic differentiation factor 4 (331 aa).

The segment at 1–80 (MSKTFVKSKE…GPKKKKMTKA (80 aa)) is disordered. A compositionally biased stretch (acidic residues) spans 52–64 (DSIEEEEEEEEDG). Over residues 67–79 (PKRRGPKKKKMTK) the composition is skewed to basic residues. The region spanning 87 to 139 (ARRVKANARERTRMHGLNDALDNLRRVMPCYSKTQKLSKIETLRLARNYIWAL) is the bHLH domain. A disordered region spans residues 246 to 265 (TPPYEGPLTPPLSISGNFSL).

Efficient DNA binding requires dimerization with another bHLH protein. Serine or threonine phosphorylation within the basic region may regulate neurogenic activity.

It localises to the nucleus. Functionally, probably acts as a transcriptional activator. Mediates neuronal differentiation. Required for the regulation of amacrine cell fate specification in the retina. The chain is Neurogenic differentiation factor 4 (NEUROD4) from Homo sapiens (Human).